Consider the following 163-residue polypeptide: Single-stranded DNA-binding protein 2 (163 aa).

The region spanning 1-104 (MINNVVLVGR…VVADNFQMLE (104 aa)) is the SSB domain. The disordered stretch occupies residues 109 to 163 (REGGSTGSFNGGFNNNTSSSNSYSAPAQQTPNFGRDDSPFGNSNPMDISDDDLPF). Over residues 119–130 (GGFNNNTSSSNS) the composition is skewed to low complexity. Polar residues predominate over residues 131-140 (YSAPAQQTPN). Residues 158–163 (DDDLPF) carry the Important for interaction with partner proteins motif.

As to quaternary structure, homotetramer.

In terms of biological role, plays an important role in DNA replication, recombination and repair. Binds to ssDNA and to an array of partner proteins to recruit them to their sites of action during DNA metabolism. The sequence is that of Single-stranded DNA-binding protein 2 (ssb2) from Streptococcus pyogenes serotype M6 (strain ATCC BAA-946 / MGAS10394).